Consider the following 392-residue polypeptide: Branched-chain-amino-acid aminotransferase, mitochondrial (392 aa).

Residues 1–27 constitute a mitochondrion transit peptide; it reads MAAAALGQIWARKFLSVPWLLCGPRRY. Position 168 (Tyr168) interacts with substrate. Position 229 is an N6-(pyridoxal phosphate)lysine (Lys229). Position 321 is an N6-acetyllysine (Lys321).

This sequence belongs to the class-IV pyridoxal-phosphate-dependent aminotransferase family. In terms of assembly, homodimer. It depends on pyridoxal 5'-phosphate as a cofactor.

It is found in the mitochondrion. The enzyme catalyses L-leucine + 2-oxoglutarate = 4-methyl-2-oxopentanoate + L-glutamate. The catalysed reaction is L-isoleucine + 2-oxoglutarate = (S)-3-methyl-2-oxopentanoate + L-glutamate. It catalyses the reaction L-valine + 2-oxoglutarate = 3-methyl-2-oxobutanoate + L-glutamate. Its function is as follows. Catalyzes the first reaction in the catabolism of the essential branched chain amino acids leucine, isoleucine, and valine. May also function as a transporter of branched chain alpha-keto acids. In Pongo abelii (Sumatran orangutan), this protein is Branched-chain-amino-acid aminotransferase, mitochondrial (BCAT2).